The sequence spans 402 residues: Acetylornithine aminotransferase (402 aa).

Residues 117–118 and phenylalanine 143 each bind pyridoxal 5'-phosphate; that span reads GA. A N(2)-acetyl-L-ornithine-binding site is contributed by arginine 146. 231–234 contacts pyridoxal 5'-phosphate; sequence DEVQ. N6-(pyridoxal phosphate)lysine is present on lysine 260. Residue threonine 288 participates in N(2)-acetyl-L-ornithine binding. Residue threonine 289 coordinates pyridoxal 5'-phosphate.

The protein belongs to the class-III pyridoxal-phosphate-dependent aminotransferase family. ArgD subfamily. Homodimer. Pyridoxal 5'-phosphate is required as a cofactor.

Its subcellular location is the cytoplasm. It catalyses the reaction N(2)-acetyl-L-ornithine + 2-oxoglutarate = N-acetyl-L-glutamate 5-semialdehyde + L-glutamate. It functions in the pathway amino-acid biosynthesis; L-arginine biosynthesis; N(2)-acetyl-L-ornithine from L-glutamate: step 4/4. The polypeptide is Acetylornithine aminotransferase (Corynebacterium efficiens (strain DSM 44549 / YS-314 / AJ 12310 / JCM 11189 / NBRC 100395)).